The following is a 412-amino-acid chain: Intraflagellar transport protein che-13 (412 aa).

Disordered stretches follow at residues 1 to 21 (MEEE…GSAI) and 162 to 193 (PPKE…NFLD). Residues 165–193 (EEDEDTAVDEQDEDDDNDDIVEEPMNFLD) are compositionally biased toward acidic residues. The stretch at 302-393 (QLASMMSKFR…VQIGVFEQSI (92 aa)) forms a coiled coil.

Belongs to the IFT57 family. Component of the IFT complex B composed of at least che-2, che-13, dyf-1, dyf-3, dyf-6, dyf-11, dyf-13, ift-20, ift-74, ift-81, ifta-2, osm-1, osm-5 and osm-6.

It is found in the cytoplasm. The protein resides in the cytoskeleton. Its subcellular location is the cilium axoneme. In terms of biological role, component of the intraflagellar transport (IFT) complex B required for transport of proteins in the motile cilium. May be required for ciliary entrance and transport of specific ciliary cargo proteins such as che-3 which are related to motility. Required for the formation of chemosensory cilia that detect chemosensory cues. The polypeptide is Intraflagellar transport protein che-13 (Caenorhabditis elegans).